We begin with the raw amino-acid sequence, 941 residues long: Putative helicase 121R (941 aa).

Residues 285 to 323 (LKQELKDIEGENSETIKRNLKDAKDLLKILNKKRANEYN) adopt a coiled-coil conformation. The disordered stretch occupies residues 492–514 (DDSGRDSEEDSQEEEVSSSQEQL). Over residues 498-507 (SEEDSQEEEV) the composition is skewed to acidic residues. The region spanning 609–791 (EEVLELYNFL…FVAREKCPET (183 aa)) is the SF3 helicase domain. ATP is bound at residue 653–660 (GNGNNGKS).

The protein belongs to the IIV-6 184L family.

The polypeptide is Putative helicase 121R (Invertebrate iridescent virus 3 (IIV-3)).